The primary structure comprises 289 residues: Protease HtpX homolog (289 aa).

2 helical membrane passes run 10–30 (TAALFGVLWAVLLGLGAVIGS) and 34–54 (STTPIWIMALVGVGTTAYGYW). A Zn(2+)-binding site is contributed by His-138. Glu-139 is a catalytic residue. His-142 is a binding site for Zn(2+). Transmembrane regions (helical) follow at residues 153–173 (VAAAVAGVITSVGQMLLIFGG) and 182–202 (LAVMAMALLAPLAAVVIQSAI). Residue Glu-207 coordinates Zn(2+).

It belongs to the peptidase M48B family. Requires Zn(2+) as cofactor.

Its subcellular location is the cell membrane. The protein is Protease HtpX homolog of Arthrobacter sp. (strain FB24).